A 512-amino-acid chain; its full sequence is Protein SHC1 (512 aa).

The segment covering 101 to 113 (EQDEFENDVEDDA) has biased composition (acidic residues). 2 disordered regions span residues 101 to 122 (EQDEFENDVEDDASSSLKEKSQ) and 144 to 164 (DGNSEFHDFAEPPPSQNESVA). 4 Sel1-like repeats span residues 318 to 353 (PDAQYLLGDAYSSGVFGKIKNRRAFLLFSAAAKRMH), 354 to 389 (IESVYRTAICYECGLGVTRNAPKAVNFLTFAATKNH), 390 to 429 (PAAMYKLGVYSYHGLMGLPDDILTKMDGYRWLRRATSMAS), and 433 to 470 (CGAPFELANIYMTGYKDLIISDPDYAMALYEKAAALGH).

It belongs to the SKT5 family.

Its subcellular location is the cytoplasm. It localises to the cytoplasmic granule membrane. Functionally, required for the activation of chitin synthase III (CHS3) activity during the sporulation process. This is Protein SHC1 (SHC1) from Saccharomyces cerevisiae (strain ATCC 204508 / S288c) (Baker's yeast).